Consider the following 232-residue polypeptide: Large ribosomal subunit protein uL1 (232 aa).

The protein belongs to the universal ribosomal protein uL1 family. As to quaternary structure, part of the 50S ribosomal subunit.

Functionally, binds directly to 23S rRNA. The L1 stalk is quite mobile in the ribosome, and is involved in E site tRNA release. Protein L1 is also a translational repressor protein, it controls the translation of the L11 operon by binding to its mRNA. In Rhizobium meliloti (strain 1021) (Ensifer meliloti), this protein is Large ribosomal subunit protein uL1.